Here is a 206-residue protein sequence, read N- to C-terminus: Pyridoxine/pyridoxamine 5'-phosphate oxidase (206 aa).

FMN contacts are provided by residues 53-58, 68-69, lysine 75, and glutamine 97; these read RMVLLK and YT. Lysine 58 serves as a coordination point for substrate. Residues tyrosine 115, arginine 119, and serine 123 each contribute to the substrate site. Residues 132–133 and tryptophan 177 contribute to the FMN site; that span reads QS. Position 183 to 185 (183 to 185) interacts with substrate; it reads RLH. Arginine 187 contributes to the FMN binding site.

This sequence belongs to the pyridoxamine 5'-phosphate oxidase family. As to quaternary structure, homodimer. The cofactor is FMN.

It carries out the reaction pyridoxamine 5'-phosphate + O2 + H2O = pyridoxal 5'-phosphate + H2O2 + NH4(+). The enzyme catalyses pyridoxine 5'-phosphate + O2 = pyridoxal 5'-phosphate + H2O2. The protein operates within cofactor metabolism; pyridoxal 5'-phosphate salvage; pyridoxal 5'-phosphate from pyridoxamine 5'-phosphate: step 1/1. It functions in the pathway cofactor metabolism; pyridoxal 5'-phosphate salvage; pyridoxal 5'-phosphate from pyridoxine 5'-phosphate: step 1/1. Catalyzes the oxidation of either pyridoxine 5'-phosphate (PNP) or pyridoxamine 5'-phosphate (PMP) into pyridoxal 5'-phosphate (PLP). This chain is Pyridoxine/pyridoxamine 5'-phosphate oxidase, found in Rhizobium leguminosarum bv. trifolii (strain WSM2304).